We begin with the raw amino-acid sequence, 127 residues long: PanD regulatory factor (127 aa).

One can recognise an N-acetyltransferase domain in the interval 1–127; the sequence is MKLTILRLEH…TAQHDGWEKR (127 aa). Residues 66-68 and 72-79 each bind CoA; these read LRV and TRRRGVGQ.

It belongs to the PanZ/PanM family. In terms of assembly, interacts with PanD in the presence of CoA. Monomer.

Its function is as follows. Controls both the activation and catalytic activity of PanD in a coenzyme A (CoA)-dependent fashion. Binding of CoA or a derivative to PanM leads to interaction with PanD, which promotes the processing and activation of pro-PanD, and subsequent substrate-mediated inhibition of the active form of PanD. Lacks acetyltransferase activity. In Salmonella typhimurium (strain LT2 / SGSC1412 / ATCC 700720), this protein is PanD regulatory factor.